Reading from the N-terminus, the 705-residue chain is Zinc finger protein 770 (705 aa).

K16 is covalently cross-linked (Glycyl lysine isopeptide (Lys-Gly) (interchain with G-Cter in SUMO2)). 3 consecutive C2H2-type zinc fingers follow at residues 31–53 (YICN…YLIH), 59–81 (FECD…QLTH), and 85–107 (FSCN…QQLH). Glycyl lysine isopeptide (Lys-Gly) (interchain with G-Cter in SUMO2) cross-links involve residues K116, K124, and K149. 3 consecutive C2H2-type zinc fingers follow at residues 164–186 (HACT…SLIH), 192–214 (FKCV…QLTH), and 220–242 (FQCC…KQIH). A Glycyl lysine isopeptide (Lys-Gly) (interchain with G-Cter in SUMO2) cross-link involves residue K266. The segment at 298 to 322 (FQCSECEECFESEQILNGHKCLPAR) adopts a C2H2-type 7; degenerate zinc-finger fold. C2H2-type zinc fingers lie at residues 485–507 (CPCD…YLIH), 513–535 (FDCN…KLTH), 640–662 (YQCS…YLIH), and 668–690 (FECS…QLTH). Residue K698 forms a Glycyl lysine isopeptide (Lys-Gly) (interchain with G-Cter in SUMO2) linkage.

The protein belongs to the krueppel C2H2-type zinc-finger protein family.

Its subcellular location is the nucleus. Functionally, may be involved in transcriptional regulation. In Mus musculus (Mouse), this protein is Zinc finger protein 770 (Znf770).